The primary structure comprises 177 residues: Large ribosomal subunit protein uL6 (177 aa).

Belongs to the universal ribosomal protein uL6 family. As to quaternary structure, part of the 50S ribosomal subunit.

In terms of biological role, this protein binds to the 23S rRNA, and is important in its secondary structure. It is located near the subunit interface in the base of the L7/L12 stalk, and near the tRNA binding site of the peptidyltransferase center. The chain is Large ribosomal subunit protein uL6 from Klebsiella pneumoniae (strain 342).